The primary structure comprises 245 residues: 1-(5-phosphoribosyl)-5-[(5-phosphoribosylamino)methylideneamino] imidazole-4-carboxamide isomerase (245 aa).

Aspartate 8 (proton acceptor) is an active-site residue. The active-site Proton donor is the aspartate 130.

The protein belongs to the HisA/HisF family.

Its subcellular location is the cytoplasm. The enzyme catalyses 1-(5-phospho-beta-D-ribosyl)-5-[(5-phospho-beta-D-ribosylamino)methylideneamino]imidazole-4-carboxamide = 5-[(5-phospho-1-deoxy-D-ribulos-1-ylimino)methylamino]-1-(5-phospho-beta-D-ribosyl)imidazole-4-carboxamide. It functions in the pathway amino-acid biosynthesis; L-histidine biosynthesis; L-histidine from 5-phospho-alpha-D-ribose 1-diphosphate: step 4/9. The chain is 1-(5-phosphoribosyl)-5-[(5-phosphoribosylamino)methylideneamino] imidazole-4-carboxamide isomerase from Pseudomonas savastanoi pv. phaseolicola (strain 1448A / Race 6) (Pseudomonas syringae pv. phaseolicola (strain 1448A / Race 6)).